We begin with the raw amino-acid sequence, 278 residues long: Hydroxyethylthiazole kinase (278 aa).

A substrate-binding site is contributed by M51. ATP is bound by residues R127 and S173. Residue G201 coordinates substrate.

Belongs to the Thz kinase family. The cofactor is Mg(2+).

The catalysed reaction is 5-(2-hydroxyethyl)-4-methylthiazole + ATP = 4-methyl-5-(2-phosphooxyethyl)-thiazole + ADP + H(+). The protein operates within cofactor biosynthesis; thiamine diphosphate biosynthesis; 4-methyl-5-(2-phosphoethyl)-thiazole from 5-(2-hydroxyethyl)-4-methylthiazole: step 1/1. Its function is as follows. Catalyzes the phosphorylation of the hydroxyl group of 4-methyl-5-beta-hydroxyethylthiazole (THZ). This is Hydroxyethylthiazole kinase from Leptothrix cholodnii (strain ATCC 51168 / LMG 8142 / SP-6) (Leptothrix discophora (strain SP-6)).